Consider the following 197-residue polypeptide: FMN-dependent NADH:quinone oxidoreductase (197 aa).

Residues Ser-10, 16-18 (SQS), 93-96 (MYNF), and 137-140 (TRGG) each bind FMN.

This sequence belongs to the azoreductase type 1 family. Homodimer. The cofactor is FMN.

It carries out the reaction 2 a quinone + NADH + H(+) = 2 a 1,4-benzosemiquinone + NAD(+). The catalysed reaction is N,N-dimethyl-1,4-phenylenediamine + anthranilate + 2 NAD(+) = 2-(4-dimethylaminophenyl)diazenylbenzoate + 2 NADH + 2 H(+). Its function is as follows. Quinone reductase that provides resistance to thiol-specific stress caused by electrophilic quinones. Also exhibits azoreductase activity. Catalyzes the reductive cleavage of the azo bond in aromatic azo compounds to the corresponding amines. The sequence is that of FMN-dependent NADH:quinone oxidoreductase from Shewanella denitrificans (strain OS217 / ATCC BAA-1090 / DSM 15013).